Here is a 367-residue protein sequence, read N- to C-terminus: Apolipoprotein A-V (367 aa).

Residues 1-20 form the signal peptide; the sequence is MAAVITWALALLSVFATVQA. Phosphoserine is present on S52. Residues 231-255 adopt a coiled-coil conformation; that stretch reads TRKAKDLHTSIQRNLDQLRDELSTF. The interval 305–332 is disordered; the sequence is EEIQHQLAPPPPSHSAFAPELGHSDSNK.

This sequence belongs to the apolipoprotein A1/A4/E family. Interacts with GPIHBP1. Interacts with SORL1; this interaction leads to APOA5 internalization and sorting either to lysosomes and degradation, or to the trans-Golgi network. Phosphorylated by FAM20C in the extracellular medium. As to expression, liver.

The protein resides in the secreted. It localises to the early endosome. It is found in the late endosome. The protein localises to the golgi apparatus. Its subcellular location is the trans-Golgi network. Minor apolipoprotein mainly associated with HDL and to a lesser extent with VLDL. May also be associated with chylomicrons. Important determinant of plasma triglyceride (TG) levels by both being a potent stimulator of apo-CII lipoprotein lipase (LPL) TG hydrolysis and an inhibitor of the hepatic VLDL-TG production rate (without affecting the VLDL-apoB production rate). Activates poorly lecithin:cholesterol acyltransferase (LCAT) and does not enhance efflux of cholesterol from macrophages. Binds heparin. This is Apolipoprotein A-V (Apoa5) from Rattus norvegicus (Rat).